A 348-amino-acid chain; its full sequence is Phospho-2-dehydro-3-deoxyheptonate aldolase, Trp-sensitive (348 aa).

Belongs to the class-I DAHP synthase family.

It catalyses the reaction D-erythrose 4-phosphate + phosphoenolpyruvate + H2O = 7-phospho-2-dehydro-3-deoxy-D-arabino-heptonate + phosphate. The protein operates within metabolic intermediate biosynthesis; chorismate biosynthesis; chorismate from D-erythrose 4-phosphate and phosphoenolpyruvate: step 1/7. In terms of biological role, stereospecific condensation of phosphoenolpyruvate (PEP) and D-erythrose-4-phosphate (E4P) giving rise to 3-deoxy-D-arabino-heptulosonate-7-phosphate (DAHP). The polypeptide is Phospho-2-dehydro-3-deoxyheptonate aldolase, Trp-sensitive (aroH) (Buchnera aphidicola subsp. Acyrthosiphon pisum (strain APS) (Acyrthosiphon pisum symbiotic bacterium)).